The following is a 522-amino-acid chain: Circadian clock oscillator protein KaiC (522 aa).

2 KaiC domains span residues 1-248 (MKKS…INIF) and 262-522 (ARVS…DDLL). ATP contacts are provided by G50, T51, G52, K53, T54, S90, K225, L226, R227, T229, H231, T241, D242, T291, G292, T293, G294, K295, T296, and L297. Residue T54 participates in Mg(2+) binding. T296 is a binding site for Mg(2+). Mg(2+) is bound at residue E319. ATP is bound at residue W332. S432 is modified (phosphoserine; by autocatalysis). A Phosphothreonine; by autocatalysis modification is found at T433. Positions 452, 458, 459, 460, 462, 464, and 466 each coordinate ATP.

It belongs to the KaiC family. In terms of assembly, homohexamer; hexamerization is dependent on ATP-binding. The KaiABC complex composition changes during the circadian cycle to control KaiC phosphorylation. Complexes KaiC(6), KaiA(2-4):KaiC(6), KaiB(6):KaiC(6) and KaiC(6):KaiB(6):KaiA(12) are among the most important forms, many form cooperatively. KaiC interacts with SasA, activating its autokinase function and leading to RpaA activation. The cofactor is Mg(2+). Phosphorylated on serine and threonine residues by autocatalysis. Has a 4 step phosphorylation cycle; the autokinase acts first on Thr-433, then Ser-432. When Ser-432 is modified KaiC switches to an autophosphatase mode, acting first on phospho-Thr-433 then phospho-Ser-432.

It carries out the reaction L-seryl-[protein] + ATP = O-phospho-L-seryl-[protein] + ADP + H(+). The catalysed reaction is L-threonyl-[protein] + ATP = O-phospho-L-threonyl-[protein] + ADP + H(+). The enzyme catalyses ATP + H2O = ADP + phosphate + H(+). With respect to regulation, the interaction with KaiA enhances its phosphorylation status, while the interaction with KaiB decreases it. In terms of biological role, central component of the KaiABC oscillator complex, which constitutes the main circadian regulator in cyanobacteria. Complex composition changes during the circadian cycle to control KaiC phosphorylation. KaiA stimulates KaiC autophosphorylation, while KaiB sequesters KaiA, leading to KaiC autodephosphorylation. Clock output pathways impact the RpaA transcriptional regulator. KaiC enhances the autophosphorylation activity of SasA, which then transfers its phosphate group to RpaA to activate it. KaiB and KaiC together enhance the phospho-RpaA dephosphatase activity of CikA. Has a weak, temperature-independent ATPase activity; ATPase activity defines the circadian period. The phosphorylation state of KaiC modulates its ATPase activity and effects KaiB binding. This Acaryochloris marina (strain MBIC 11017) protein is Circadian clock oscillator protein KaiC.